The sequence spans 492 residues: Catalase-2 (492 aa).

Catalysis depends on residues histidine 65 and asparagine 138. Tyrosine 348 provides a ligand contact to heme.

Belongs to the catalase family. In terms of assembly, homotetramer and heterotetramer. At least six or seven isozymes are produced from a mixture of 3 gene products. Interacts with NCA1. Interacts with LSD1. The cofactor is heme.

The protein resides in the cytoplasm. The protein localises to the cytosol. It is found in the peroxisome matrix. The catalysed reaction is 2 H2O2 = O2 + 2 H2O. Functionally, catalyzes the degradation of hydrogen peroxide (H(2)O(2)) generated by peroxisomal oxidases to water and oxygen, thereby protecting cells from the toxic effects of hydrogen peroxide. The chain is Catalase-2 (CAT2) from Arabidopsis thaliana (Mouse-ear cress).